Here is a 466-residue protein sequence, read N- to C-terminus: MKRFKLNYFIIGLIAILLTWSLWTTVPWRNAHQDNLAAIKARGELRISTLDAPLSYYSVNNQPSGFDYDLAQRFADYLGVTLKVRVRSNLNQLFDDLENDNADILAASLIYNAERLNRFTVGPSYYSVSQQLVYRLGQPRPKNLGDLRGRLAVASGSAQITQLRQLKKKQYPQLAWEVSSDLSSRSLLEKVADGKLDYTLADSASVGLLQRVHPQLAVAFDITEEKPVTWYLRRSDSEGLSAALLDFFSQLNDNGIMARLEEKYLGHVGGFDYVDTKTFLNAIDATLPALQPLFERYAHDIDWKLLAAISYQESHWDPLATSATGVRGLMMLTRPTADSLGIGDRTNAEQSVRGGALYLSRMMQRLPDTIPEDEKIWFALAAYNMGYAHMLDARALTAKQQGNADSWVDVKLRLPMLSQPRYYKQTLYGYARGQQAYNYVENIRRYEISLVGYLQEKEKKAAQLAD.

A signal peptide spans 1–24 (MKRFKLNYFIIGLIAILLTWSLWT). The segment at 25–268 (TVPWRNAHQD…RLEEKYLGHV (244 aa)) is non-LT domain. Positions 269–466 (GGFDYVDTKT…KEKKAAQLAD (198 aa)) are LT domain. E313 is an active-site residue.

This sequence in the N-terminal section; belongs to the bacterial solute-binding protein 3 family. It in the C-terminal section; belongs to the transglycosylase Slt family.

It localises to the cell outer membrane. The enzyme catalyses Exolytic cleavage of the (1-&gt;4)-beta-glycosidic linkage between N-acetylmuramic acid (MurNAc) and N-acetylglucosamine (GlcNAc) residues in peptidoglycan, from either the reducing or the non-reducing ends of the peptidoglycan chains, with concomitant formation of a 1,6-anhydrobond in the MurNAc residue.. In terms of biological role, murein-degrading enzyme that degrades murein glycan strands and insoluble, high-molecular weight murein sacculi, with the concomitant formation of a 1,6-anhydromuramoyl product. Lytic transglycosylases (LTs) play an integral role in the metabolism of the peptidoglycan (PG) sacculus. Their lytic action creates space within the PG sacculus to allow for its expansion as well as for the insertion of various structures such as secretion systems and flagella. This is Membrane-bound lytic murein transglycosylase F from Sodalis glossinidius (strain morsitans).